Consider the following 1119-residue polypeptide: Transient receptor potential cation channel subfamily A member 1 (1119 aa).

At 1–718 (MKRSLRKMWR…MKWLAYGFRA (718 aa)) the chain is on the cytoplasmic side. 16 ANK repeats span residues 62–92 (MDTFFLHYAAAEGQIELMEKITRDSSLEVLH), 97–126 (YGNTPLHCAVEKNQIESVKFLLSRGANPNL), 130–160 (NMMAPLHIAVQGMNNEVMKVLLEHRTIDVNL), 164–193 (NGNTAVIIACTTNNSEALQILLKKGAKPCK), 197–226 (WGCFPIHQAAFSGSKECMEIILRFGEEHGY), 238–267 (GKATPLHLAVQNGDLEMIKMCLDNGAQIDP), 271–301 (GRCTAIHFAATQGATEIVKLMISSYSGSVDI), 308–337 (CHETMLHRASLFDHHELADYLISVGADINK), 341–370 (EGRSPLILATASASWNIVNLLLSKGAQVDI), 374–403 (FGRNFLHLTVQQPYGLKNLRPEFMQMQQIK), 412–441 (DGCTPLHYACRQGGPGSVNNLLGFNVSIHS), 445–474 (DKKSPLHFAASYGRINTCQRLLQDISDTRL), 481–510 (HGMTPLHLAAKNGHDKVVQLLLKKGALFLS), 513–542 (NGWTALHHASMGGYTQTMKVILDTNLKCTD), 547–576 (DGNTALHFAAREGHAKAVALLLSHNADIVL), and 579–609 (QQASFLHLALHNKRKEVVLTIIRSKRWDECL). Cystine bridges form between Cys192-Cys665, Cys462-Cys665, Cys608-Cys621, Cys621-Cys665, and Cys633-Cys856. Position 394 is a 4-hydroxyproline; by EGLN1; transient; in normoxia and hyperoxia (Pro394). (E)-cinnamaldehyde is bound by residues Cys414 and Cys421. Position 621 (Cys621) interacts with (E)-cinnamaldehyde. The residue at position 633 (Cys633) is a Cysteine sulfenic acid (-SOH); transient; in hyperoxia. The (E)-cinnamaldehyde site is built by Cys641, Cys665, and Lys710. A helical membrane pass occupies residues 719–739 (HMMNLGSYCLGLIPMTILVVN). Over 740–767 (IKPGMAFNSTGIINETSDHSEILDTTNS) the chain is Extracellular. Asn747 and Asn753 each carry an N-linked (GlcNAc...) asparagine glycan. A helical transmembrane segment spans residues 768 to 793 (YLIKTCMILVFLSSIFGYCKEAGQIF). Residues Glu788 and Gln791 each coordinate Ca(2+). The Cytoplasmic segment spans residues 794–798 (QQKRN). The chain crosses the membrane as a helical span at residues 799-823 (YFMDISNVLEWIIYTTGIIFVLPLF). 2 residues coordinate Ca(2+): Asn805 and Glu808. Residues 824 to 829 (VEIPAH) lie on the Extracellular side of the membrane. A helical transmembrane segment spans residues 830–850 (LQWQCGAIAVYFYWMNFLLYL). The Cytoplasmic portion of the chain corresponds to 851–862 (QRFENCGIFIVM). Cys856 is subject to Cysteine sulfenic acid (-SOH); transient; in hyperoxia. The helical transmembrane segment at 863-892 (LEVILKTLLRSTVVFIFLLLAFGLSFYILL) threads the bilayer. Over 893 to 901 (NLQDPFSSP) the chain is Extracellular. Residues 902–922 (LLSIIQTFSMMLGDINYRESF) constitute an intramembrane region (pore-forming). At 923–933 (LEPYLRNELAH) the chain is on the extracellular side. A helical transmembrane segment spans residues 934 to 960 (PVLSFAQLVSFTIFVPIVLMNLLIGLA). Over 961 to 1119 (VGDIAEVQKH…VKAKTHHLEP (159 aa)) the chain is Cytoplasmic. Positions 1042-1071 (MEILKQKYRLKDLTFLLEKQHELIKLIIQK) form a coiled coil. A 1,2-diacyl-sn-glycero-3-phospho-(1D-myo-inositol) is bound at residue 1046–1052 (KQKYRLK).

The protein belongs to the transient receptor (TC 1.A.4) family. In terms of assembly, homotetramer. Interacts with TMEM100. Interacts with EGLN1. Interacts with the scorpion wasabi receptor toxin at the same site that electrophiles but in a non-covalent manner. TRPA1 activation by electrophiles occurs though covalent modification of specific cysteine residues in the N-terminal cytoplasmic domain. In terms of processing, hydroxylation is required for TRPA1 activity inhibition in normoxia. In hypoxia, the decrease in oxygen concentration diminishes the activity of the hydroxylase EGLN1, thus relieving TRPA1 from inhibition and ultimately leading to channel activation. Post-translationally, oxidation of Cys-633 and Cys-856 in hyperoxia may override the hydroxylase EGLN1-mediated inhibition, causing TRPA1 activation.

It is found in the cell membrane. The enzyme catalyses Ca(2+)(in) = Ca(2+)(out). It catalyses the reaction Mg(2+)(in) = Mg(2+)(out). The catalysed reaction is Na(+)(in) = Na(+)(out). It carries out the reaction K(+)(in) = K(+)(out). The enzyme catalyses Zn(2+)(in) = Zn(2+)(out). Electrophilic ligands activate the channel by covalent modification of intracellular cysteines; Cys-621 plays a key role in covalent binding of electrophiles. Extracellular Ca(2+) both potentiates and inactivates TRPA1; a rapid potentiation follows by slow desensitization. Activated by increase in intracellular Ca(2+) concentration. Inhibited by the potent blocker of TRPV channels ruthenium red, A-967079, AP-18, HC-030031, and aryl sulfonamide derivative (S)-N-(4-chlorobenzyl)-1-((4-fluorophenyl)sulfonyl)pyrrolidine-2-carboxamide (ASD). Activated by benzyl isothiocyanate (BITC), iodoacetamide, sulfhydryl reactive agent MTSEA, N-methyl maleimide (NMM), N-ethylmaleimide (NEM), and 2-aminoethyldiphenylborinate (2-APB). Also activated by hyperoxia. Acivated by intracellular Zn(2+). TRPA1 activation may critically depend on the presence of small intracellular compounds such as polyphosphates. Ligand-activated Ca(2+)-permeable, nonselective cation channel involved in pain detection and possibly also in cold perception, oxygen concentration perception, cough, itch, and inner ear function. Has a relatively high Ca(2+) selectivity, with a preference for divalent over monovalent cations (Ca(2+) &gt; Ba(2+) &gt; Mg(2+) &gt; NH4(+) &gt; Li(+) &gt; K(+)), the influx of cation into the cytoplasm leads to membrane depolarization. Has a central role in the pain response to endogenous inflammatory mediators, such as bradykinin and to a diverse array of irritants. Activated by a large variety of structurally unrelated electrophilic and non-electrophilic chemical compounds, such as allylthiocyanate (AITC) from mustard oil or wasabi, cinnamaldehyde, diallyl disulfide (DADS) from garlic, and acrolein, an environmental irritant. Electrophilic ligands activate TRPA1 by interacting with critical N-terminal Cys residues in a covalent manner. Non-electrophile agonists bind at distinct sites in the transmembrane domain to promote channel activation. Also acts as an ionotropic cannabinoid receptor by being activated by delta(9)-tetrahydrocannabinol (THC), the psychoactive component of marijuana. May be a component for the mechanosensitive transduction channel of hair cells in inner ear, thereby participating in the perception of sounds. The sequence is that of Transient receptor potential cation channel subfamily A member 1 from Homo sapiens (Human).